The following is a 1021-amino-acid chain: PDZ domain-containing protein 7 (1021 aa).

2 consecutive PDZ domains span residues 86-156 (AVRV…LTSS) and 210-279 (IVHL…EVLK). Residues 324–344 (SSSSVSSYASSAPCSSGSLPS) show a composition bias toward low complexity. 3 disordered regions span residues 324-345 (SSSS…LPSD), 431-495 (ITRS…DSRS), and 724-814 (RRGA…HRPR). The span at 729–744 (APPPQPPPVAPRPPRP) shows a compositional bias: pro residues. Residues 758–767 (QQNQSQTPAQ) show a composition bias toward polar residues. Over residues 772 to 794 (SRSRSRSRSHSRGQGKSPGRRRS) the composition is skewed to basic residues. Residues 799-808 (PIATAATANG) show a composition bias toward low complexity. Residues 858–930 (TITLSKMKQS…QRAVDTIRRA (73 aa)) form the PDZ 3 domain. A disordered region spans residues 992 to 1021 (QLQQSLSSALKVPQSIPKLSPILKDPHDPS).

In terms of assembly, homodimerizes (via PDZ2 domain). Component of USH2 complex, composed of ADGRV1, PDZD7, USH2A and WHRN. Interacts (via PDZ domains) with WHRN; the interaction is direct. Interacts with USH1G. Interacts with ADGRV1 (via the cytoplasmic region). Interacts with USH2A (via the cytoplasmic region). Interacts with MYO7A (via MyTH4-FERM domains). Isoform 1 is expressed in developing and adult cochlea but not retina. Isoform 2 is expressed in developing and adult cochlea and retina. Isoform 3 is expressed in adult cochlea and retina. Isoform 4 is expressed in retina and developing cochlea but not adult cochlea. Isoform 5 is expressed in adult cochlea but not in developing cochlea or retina.

It localises to the cell projection. The protein resides in the cilium. It is found in the nucleus. The protein localises to the stereocilium. In cochlear developing hair cells, essential in organizing the USH2 complex at stereocilia ankle links. Blocks inhibition of adenylate cyclase activity mediated by ADGRV1. The polypeptide is PDZ domain-containing protein 7 (Mus musculus (Mouse)).